Consider the following 313-residue polypeptide: Acetaldehyde dehydrogenase 2 (313 aa).

12–15 (SGNI) lines the NAD(+) pocket. The Acyl-thioester intermediate role is filled by Cys-132. NAD(+) is bound by residues 163-171 (SAGPGTRAN) and Asn-287.

Belongs to the acetaldehyde dehydrogenase family.

The enzyme catalyses acetaldehyde + NAD(+) + CoA = acetyl-CoA + NADH + H(+). This chain is Acetaldehyde dehydrogenase 2 (amnH), found in Paraburkholderia xenovorans (strain LB400).